Reading from the N-terminus, the 695-residue chain is Tail-specific protease (695 aa).

The signal sequence occupies residues 1–29; it reads MVMKFKMSKNVICYTWLSVCLSSAIPAFA. Residues 256–316 form the PDZ domain; sequence IGTTLQSEDD…RLEDLVEKIK (61 aa). Catalysis depends on charge relay system residues Ser-459, Asp-470, and Lys-484.

This sequence belongs to the peptidase S41A family.

The protein resides in the cell inner membrane. The catalysed reaction is The enzyme shows specific recognition of a C-terminal tripeptide, Xaa-Yaa-Zaa, in which Xaa is preferably Ala or Leu, Yaa is preferably Ala or Tyr, and Zaa is preferably Ala, but then cleaves at a variable distance from the C-terminus. A typical cleavage is -Ala-Ala-|-Arg-Ala-Ala-Lys-Glu-Asn-Tyr-Ala-Leu-Ala-Ala.. Functionally, involved in the cleavage of a C-terminal peptide of 11 residues from the precursor form of penicillin-binding protein 3 (PBP3). May be involved in protection of the bacterium from thermal and osmotic stresses. In Haemophilus influenzae (strain ATCC 51907 / DSM 11121 / KW20 / Rd), this protein is Tail-specific protease (prc).